The primary structure comprises 372 residues: DNA replication and repair protein RecF (372 aa).

An ATP-binding site is contributed by 30–37 (GENGQGKT).

The protein belongs to the RecF family.

The protein localises to the cytoplasm. The RecF protein is involved in DNA metabolism; it is required for DNA replication and normal SOS inducibility. RecF binds preferentially to single-stranded, linear DNA. It also seems to bind ATP. The polypeptide is DNA replication and repair protein RecF (Anaeromyxobacter dehalogenans (strain 2CP-C)).